A 319-amino-acid polypeptide reads, in one-letter code: ATP-dependent 6-phosphofructokinase (319 aa).

ATP-binding positions include G10, R71 to S72, and G101 to S104. D102 is a Mg(2+) binding site. Residue T125 to D127 coordinates substrate. D127 acts as the Proton acceptor in catalysis. Position 154 (R154) interacts with ADP. Residues R162 and M169–R171 contribute to the substrate site. G185–E187 serves as a coordination point for ADP. Residues E223, R244, and H250–R253 each bind substrate.

The protein belongs to the phosphofructokinase type A (PFKA) family. ATP-dependent PFK group I subfamily. Prokaryotic clade 'B1' sub-subfamily. Homotetramer. It depends on Mg(2+) as a cofactor.

It localises to the cytoplasm. The enzyme catalyses beta-D-fructose 6-phosphate + ATP = beta-D-fructose 1,6-bisphosphate + ADP + H(+). Its pathway is carbohydrate degradation; glycolysis; D-glyceraldehyde 3-phosphate and glycerone phosphate from D-glucose: step 3/4. Its activity is regulated as follows. Allosterically activated by ADP and other diphosphonucleosides, and allosterically inhibited by phosphoenolpyruvate. Its function is as follows. Catalyzes the phosphorylation of D-fructose 6-phosphate to fructose 1,6-bisphosphate by ATP, the first committing step of glycolysis. This is ATP-dependent 6-phosphofructokinase from Wolinella succinogenes (strain ATCC 29543 / DSM 1740 / CCUG 13145 / JCM 31913 / LMG 7466 / NCTC 11488 / FDC 602W) (Vibrio succinogenes).